Reading from the N-terminus, the 606-residue chain is Vitamin B12 transporter BtuB (606 aa).

The first 21 residues, 1–21, serve as a signal peptide directing secretion; it reads MKKTLLAVALAPLCLPSQVFA. The short motif at 28-35 is the TonB box element; sequence DVMVVTAN. The TBDR plug domain occupies 40-152; that stretch reads PIKNVIAPIS…IGGVLNIITA (113 aa). The 450-residue stretch at 157-606 folds into the TBDR beta-barrel domain; the sequence is ESVAEVTAGG…SYYATATYKF (450 aa). Residues 589-606 carry the TonB C-terminal box motif; it reads ETYNVQERSYYATATYKF.

The protein belongs to the TonB-dependent receptor family. BtuB (TC 1.B.14.3.1) subfamily.

It is found in the cell outer membrane. Functionally, involved in the active translocation of vitamin B12 (cyanocobalamin) across the outer membrane to the periplasmic space. It derives its energy for transport by interacting with the trans-periplasmic membrane protein TonB. The protein is Vitamin B12 transporter BtuB of Photobacterium profundum (strain SS9).